Consider the following 66-residue polypeptide: Large ribosomal subunit protein bL35 (66 aa).

The protein belongs to the bacterial ribosomal protein bL35 family.

This Caulobacter sp. (strain K31) protein is Large ribosomal subunit protein bL35.